Consider the following 171-residue polypeptide: Adenine phosphoribosyltransferase (171 aa).

The protein belongs to the purine/pyrimidine phosphoribosyltransferase family. In terms of assembly, homodimer.

The protein localises to the cytoplasm. The catalysed reaction is AMP + diphosphate = 5-phospho-alpha-D-ribose 1-diphosphate + adenine. The protein operates within purine metabolism; AMP biosynthesis via salvage pathway; AMP from adenine: step 1/1. Catalyzes a salvage reaction resulting in the formation of AMP, that is energically less costly than de novo synthesis. The polypeptide is Adenine phosphoribosyltransferase (Rhodospirillum rubrum (strain ATCC 11170 / ATH 1.1.1 / DSM 467 / LMG 4362 / NCIMB 8255 / S1)).